Here is a 240-residue protein sequence, read N- to C-terminus: Probable phosphatase Pcar_2586 (240 aa).

Histidine 12, histidine 14, histidine 20, histidine 45, glutamate 78, histidine 105, histidine 136, aspartate 197, and histidine 199 together coordinate Zn(2+).

This sequence belongs to the PHP family. Zn(2+) serves as cofactor.

The polypeptide is Probable phosphatase Pcar_2586 (Syntrophotalea carbinolica (strain DSM 2380 / NBRC 103641 / GraBd1) (Pelobacter carbinolicus)).